The sequence spans 654 residues: Endoplasmic reticulum chaperone BiP (654 aa).

An N-terminal signal peptide occupies residues 1-18; the sequence is MKLSLVAAMLLLLSAARA. The interval 1–80 is required for interaction with ELAPOR1; it reads MKLSLVAAML…EGERLIGDAA (80 aa). 36–39 provides a ligand contact to ATP; it reads GTTY. S86 is modified (phosphoserine). K96 contributes to the ATP binding site. K125 is modified (N6-acetyllysine). The tract at residues 125 to 280 is nucleotide-binding (NBD); the sequence is KPYIQVDIGG…KKKTGKDVRK (156 aa). Y160 is subject to 3'-nitrotyrosine. N6-acetyllysine is present on K213. 227–229 is a binding site for ATP; that stretch reads GGT. At K271 the chain carries N6-acetyllysine. Position 293–300 (293–300) interacts with ATP; it reads EKAKRALS. Position 326 is an N6-acetyllysine (K326). Residue K352 forms a Glycyl lysine isopeptide (Lys-Gly) (interchain with G-Cter in SUMO2) linkage. K353 carries the post-translational modification N6-acetyllysine; alternate. K353 participates in a covalent cross-link: Glycyl lysine isopeptide (Lys-Gly) (interchain with G-Cter in SUMO1); alternate. 364–367 is a binding site for ATP; the sequence is GSTR. Residues 409-419 are interdomain linker; it reads QDTGDLALLDV. Positions 420-500 are substrate-binding (SBD); the sequence is CPLTLGIETV…PRGVPQIEVT (81 aa). N6-succinyllysine is present on K447. R492 is subject to Omega-N-methylarginine. T518 is subject to O-AMP-threonine; alternate. T518 bears the Phosphothreonine; alternate mark. An N6,N6,N6-trimethyllysine; by METTL21A; in vitro modification is found at K585. Residue K585 is modified to N6,N6-dimethyllysine; alternate. K585 is modified (N6-methyllysine; alternate). Residue K591 is modified to N6-methyllysine. The tract at residues 633-654 is disordered; sequence KLYGSAGPPPTGEEDTAEKDEL. 2 positions are modified to phosphothreonine: T643 and T648. Over residues 644–654 the composition is skewed to acidic residues; the sequence is GEEDTAEKDEL. The Prevents secretion from ER motif lies at 651–654; the sequence is KDEL.

Belongs to the heat shock protein 70 family. Monomer and homooligomer; homooligomerization via the interdomain linker inactivates the chaperone activity and acts as a storage of HSPA5/BiP molecules. Interacts with DNAJC1 (via J domain). Component of an EIF2 complex at least composed of CELF1/CUGBP1, CALR, CALR3, EIF2S1, EIF2S2, HSP90B1 and HSPA5. Part of a large chaperone multiprotein complex comprising DNAJB11, HSP90B1, HSPA5, HYOU, PDIA2, PDIA4, PDIA6, PPIB, SDF2L1, UGGT1 and very small amounts of ERP29, but not, or at very low levels, CALR nor CANX. Interacts with TMEM132A and TRIM21. May form a complex with ERLEC1, OS9, SEL1L and SYVN1. Interacts with DNAJC10. Interacts with DNAJB9/ERdj4; leading to recruit HSPA5/BiP to ERN1/IRE1. Interacts with ERN1/IRE1 (via luminal domain); the interaction takes place following interaction with DNAJB9/ERdj4 and leads to inactivate ERN1/IRE1, the interaction also competitively inhibits ERN1 interaction with MANF. Interacts directly with MANF (via SAP domain); the interaction inhibits ATP binding to HSPA5/BiP and subsequent nucleotide exchange. Interacts with EIF2AK3/PERK (via luminal domain); interaction leads to inactivate EIF2AK3/PERK. Interacts with MX1. Interacts with METTL23. Interacts with CEMIP; the interaction induces calcium leakage from the endoplasmic reticulum and cell migration. Interacts with PCSK4 form; the interaction takes place in the endoplasmic reticulum. Interacts with CIPC. Interacts with CCDC88B (via C-terminus); the interaction opposes ERN1-mediated JNK activation, protecting against apoptosis. Interacts with INPP5K; necessary for INPP5K localization at the endoplasmic reticulum. Interacts with MANF; the interaction is direct. Interacts with LOXL2; leading to activate the ERN1/IRE1-XBP1 pathway of the unfolded protein response. Interacts with CLU under stressed condition; interaction increases CLU protein stability; facilitates its retrotranslocation and redistribution to the mitochondria; cooperatively suppress stress-induced apoptosis by stabilizing mitochondrial membrane integrity. Interacts with CCDC47. Interacts with CLN3. Interacts with ELAPOR1; may regulate the function of HSPA5 in apoptosis and cell proliferation. Interacts with CASP7. Interacts with ILDR2; the interaction stabilizes ILDR2 expression. Interacts with ADAM7. In terms of processing, in unstressed cells, AMPylation at Thr-518 by FICD inactivates the chaperome activity: AMPylated form is locked in a relatively inert state and only weakly stimulated by J domain-containing proteins. In response to endoplasmic reticulum stress, de-AMPylation by the same protein, FICD, restores the chaperone activity.

It is found in the endoplasmic reticulum lumen. It localises to the melanosome. The protein localises to the cytoplasm. The protein resides in the cell surface. It carries out the reaction ATP + H2O = ADP + phosphate + H(+). The chaperone activity is regulated by ATP-induced allosteric coupling of the nucleotide-binding (NBD) and substrate-binding (SBD) domains. In the ADP-bound and nucleotide-free (apo) states, the two domains have little interaction. In contrast, in the ATP-bound state the two domains are tightly coupled, which results in drastically accelerated kinetics in both binding and release of polypeptide substrates. J domain-containing co-chaperones (DNAJB9/ERdj4 or DNAJC10/ERdj5) stimulate the ATPase activity and are required for efficient substrate recognition by HSPA5/BiP. Homooligomerization inactivates participating HSPA5/BiP protomers and probably act as reservoirs to store HSPA5/BiP molecules when they are not needed by the cell. In terms of biological role, endoplasmic reticulum chaperone that plays a key role in protein folding and quality control in the endoplasmic reticulum lumen. Involved in the correct folding of proteins and degradation of misfolded proteins via its interaction with DNAJC10/ERdj5, probably to facilitate the release of DNAJC10/ERdj5 from its substrate. Acts as a key repressor of the EIF2AK3/PERK and ERN1/IRE1-mediated unfolded protein response (UPR). In the unstressed endoplasmic reticulum, recruited by DNAJB9/ERdj4 to the luminal region of ERN1/IRE1, leading to disrupt the dimerization of ERN1/IRE1, thereby inactivating ERN1/IRE1. Also binds and inactivates EIF2AK3/PERK in unstressed cells. Accumulation of misfolded protein in the endoplasmic reticulum causes release of HSPA5/BiP from ERN1/IRE1 and EIF2AK3/PERK, allowing their homodimerization and subsequent activation. Plays an auxiliary role in post-translational transport of small presecretory proteins across endoplasmic reticulum (ER). May function as an allosteric modulator for SEC61 channel-forming translocon complex, likely cooperating with SEC62 to enable the productive insertion of these precursors into SEC61 channel. Appears to specifically regulate translocation of precursors having inhibitory residues in their mature region that weaken channel gating. May also play a role in apoptosis and cell proliferation. The protein is Endoplasmic reticulum chaperone BiP of Pongo abelii (Sumatran orangutan).